A 429-amino-acid chain; its full sequence is MTVTKEAPEVMPFEGLTEEINLMSDNERVWWQKTGSMLSRVLSSADYTWKEQHKHLKFYAQVLLPHLGPYPQSFRSSITRSGLPFELSINYQQNGNPLVVRIGFEPLNALSGTPDDPFNQAPAAEVLSLLDQMHIPGFDSQIWDKAVEHHTVNHTEREALRDSDLGAGYIRSQTAYGFDLLRDGNIAVKGYSFPALKCQITGQSMAQMMAGLVADLAPLVDCSQAFAIVDEYLQDTGYDERAFFSWDFVEPSRSRLKLYTGSSSVTWGKLAEVWTLGNRVQNPTVARGLEYLRQLFDLIKLSDGQRNIVVAFDDRQDSSKETPLLWNYEMRAGDPTPLTKIYFPVHGENDLQVINGVAEFLCQIGLSHGKTYVEKVKSYYPGIDLSTTERFTSWVSFAYTEKTGVYLSTYYHSSTDNPWKMTTEEDSQL.

8 residues coordinate dimethylallyl diphosphate: R101, K189, Y191, K257, Y259, Y342, Y406, and Y410.

The protein belongs to the tryptophan dimethylallyltransferase family.

The catalysed reaction is cyclo(L-Trp-L-Trp) + 2 dimethylallyl diphosphate = cyclo(N(8)-(alpha,alpha-dimethylallyl)-L-Trp-6a-(alpha,alpha-dimethylallyl)-L-Trp) + 2 diphosphate. The protein operates within alkaloid biosynthesis. Prenyltransferase; part of the gene cluster that mediates the biosynthesis of okaramine B, a prenylated indole alkaloid that possesses an unusual octacyclic ring system, including a four-membered azetidine ring and an eight-membered azocine ring, and that exhibits insecticidal activity against silkworm larvae. Within the pathway, okaC performs asymmetric reverse prenylation of cyclo(L-Trp-L-Trp) at N-1 and C-2' of the indole ring to produce the cyclic prenylated tryptophan dimer cyclo(N8-(alpha,alpha-dimethylallyl)-L-Trp-6a-(alpha,alpha-dime-thylallyl)-L-Trp). The biosynthesis begins with the NRPS okaA that condenses two tryptophan molecules into cyclo(L-Trp-L-Trp). Prenylation by the prenyltransferase okaC then leads to the formation of cyclo(N8-(alpha,alpha-dimethylallyl)-L-Trp-6a-(alpha,alpha-dime-thylallyl)-L-Trp). This is followed by indole 2,3-epoxidation by the FAD-dependent monooxygenase okaB to facilitate the formation of the hexahydropyrrolo[2,3-b]indole (HPI) moiety of okaramine C. The cytochrome P450 monooxygenase okaD then likely catalyzes formation of the eight-membered ring of okaramine A. The dioxygenase okaE further forms the unusual 2-dimethyl-3-methyl-azetidine ring to yield 12-deshydroxyl okaramine E, as well as the hydroxylation of 12-deshydroxyl okaramine E to produce okaramine E. The cytochrome P450 monoxygenase okaG converts 12-deshydroxyl okaramine E into 3-desmethyl okaramine B which is further methylated by the methyltransferase okaF into okaramine B. In a shunt pathway, okaG and okaF together are also able to convert okaramine E into okaramine D. Okaramine H is produced by nonenzymatic conversion from okaramine A. The polypeptide is Prenyltransferase okaC (Penicillium ochrochloron).